The following is a 331-amino-acid chain: MGNCLKHFKQQLPSIAPKPLIIPPIFSARKRESESLQIRGLKKATKKFRQDRVVECEDYSVRKFYKGYIDETTFAPSRAGTGIAVSVMECDSSRSLQDWMAVVRSLGQLSHQNLVNFLGYCCEDNKPFFLVFEYSHKGSLDSHIFGKEEEALPWEIRVKIAIGTAQGLAFLHSIKNSPLNRELRMHNIMLDEQYNAKLFYLEPTKRSLVDEGLKRGRFTYLSPEWGSLGILDMTTDVYIFGMILLELLMGSKDRKKIKEEQGLVDYWTSSFLPDNYKIEEIIDPRLGSDYSANAATQMGTLINRCTAHNTKKRPLMQQVLDGLNHIAEIKD.

Glycine 2 carries the N-myristoyl glycine lipid modification. Cysteine 4 carries S-palmitoyl cysteine lipidation. One can recognise a Protein kinase domain in the interval 58–328 (DYSVRKFYKG…VLDGLNHIAE (271 aa)).

It belongs to the protein kinase superfamily. Ser/Thr protein kinase family. As to expression, restricted to stigma in flowers.

It is found in the cell membrane. The protein resides in the nucleus. Collaboratively with BKN2/SZE2, involved in compatible pollen-stigma interactions. This Arabidopsis thaliana (Mouse-ear cress) protein is Inactive serine/threonine-protein kinase BKN1.